We begin with the raw amino-acid sequence, 206 residues long: mRNA-decapping protein D9 (206 aa).

Residues 23–206 (KKTHVFAICV…FIYNTLLYSK (184 aa)) enclose the Nudix hydrolase domain. A Nudix box motif is present at residues 104 to 125 (GKLNKSETIDDCIRREIKEETD). E110 serves as a coordination point for Mg(2+). The Nucleophile role is filled by E119. Mg(2+) is bound by residues E123 and D144.

The protein belongs to the Nudix hydrolase family. It depends on Mg(2+) as a cofactor. Mn(2+) is required as a cofactor.

Functionally, decapping enzyme required for the removal of the 5'-end m7GpppN cap tethered to viral and host mRNAs to allow their decay in cells. May therefore accelerate viral and cellular mRNA turnover to eliminate competing host mRNAs and allow stage-specific synthesis of viral proteins. Acceleration of the turnover of cellular transcripts may even promote the shutoff of host protein synthesis. Does not cleave unmethylated RNAs or RNAs shorter than 24 nucleotides. In Oryctolagus cuniculus (Rabbit), this protein is mRNA-decapping protein D9.